The chain runs to 317 residues: R-phycoerythrin gamma chain, chloroplastic (317 aa).

The transit peptide at methionine 1 to methionine 40 directs the protein to the chloroplast. Residues cysteine 94 and cysteine 133 each coordinate phycourobilin. Residue cysteine 210 participates in (2R,3E)-phycoerythrobilin binding. Residue cysteine 297 coordinates phycourobilin.

As to quaternary structure, heteromer of 1 alpha, 1 beta and 2 gamma chains. Post-translationally, contains four covalently linked bilin chromophores.

It localises to the plastid. Its subcellular location is the chloroplast thylakoid membrane. In terms of biological role, critical for the incorporation of phycoerythrin in the phycobilisome complex. This is R-phycoerythrin gamma chain, chloroplastic from Aglaothamnion neglectum (Red alga).